Consider the following 330-residue polypeptide: MSGSCQFLSRETLSSSLGWIPLINALREIFTENVVCPTRLHYPIDEDNPSSTANNILLIMPCWIPGKFLGVKQVNVFPENTKHGLPSLSSHYLLSDATTGCHLAQLDGNELTSRRTAAASALASSYLSKEDSTSLLIIGSGKVAEKLIHAHCSVRPIRSVRIWNHRFESAKSLASRASKELPSIQIDAVPIQNLENAVKCSDIISSATLSKKPIIVGSWINPGTHIDLVGGFTPHMHEADSKCIQISNVFVDTRKGALHEAGDLLTPIKEGLFSPNEVIADLFDLCNNKHSGRSQLKNPAEAITLFKSVGDSREDLAAASLAYKVHNKSS.

Belongs to the ornithine cyclodeaminase/mu-crystallin family.

It is found in the cytoplasm. This is an uncharacterized protein from Schizosaccharomyces pombe (strain 972 / ATCC 24843) (Fission yeast).